A 296-amino-acid chain; its full sequence is Ribosomal RNA small subunit methyltransferase A (296 aa).

S-adenosyl-L-methionine contacts are provided by Asn-30, Leu-32, Gly-57, Glu-78, Asp-103, and Asn-128.

This sequence belongs to the class I-like SAM-binding methyltransferase superfamily. rRNA adenine N(6)-methyltransferase family. RsmA subfamily.

The protein localises to the cytoplasm. It carries out the reaction adenosine(1518)/adenosine(1519) in 16S rRNA + 4 S-adenosyl-L-methionine = N(6)-dimethyladenosine(1518)/N(6)-dimethyladenosine(1519) in 16S rRNA + 4 S-adenosyl-L-homocysteine + 4 H(+). Specifically dimethylates two adjacent adenosines (A1518 and A1519) in the loop of a conserved hairpin near the 3'-end of 16S rRNA in the 30S particle. May play a critical role in biogenesis of 30S subunits. In Staphylococcus haemolyticus (strain JCSC1435), this protein is Ribosomal RNA small subunit methyltransferase A.